A 366-amino-acid polypeptide reads, in one-letter code: NADH-quinone oxidoreductase subunit D (366 aa).

This sequence belongs to the complex I 49 kDa subunit family. In terms of assembly, NDH-1 is composed of 14 different subunits. Subunits NuoB, C, D, E, F, and G constitute the peripheral sector of the complex.

Its subcellular location is the cell membrane. It carries out the reaction a quinone + NADH + 5 H(+)(in) = a quinol + NAD(+) + 4 H(+)(out). Functionally, NDH-1 shuttles electrons from NADH, via FMN and iron-sulfur (Fe-S) centers, to quinones in the respiratory chain. The immediate electron acceptor for the enzyme in this species is believed to be a menaquinone. Couples the redox reaction to proton translocation (for every two electrons transferred, four hydrogen ions are translocated across the cytoplasmic membrane), and thus conserves the redox energy in a proton gradient. This is NADH-quinone oxidoreductase subunit D from Bacillus thuringiensis subsp. konkukian (strain 97-27).